The sequence spans 216 residues: Eukaryotic translation initiation factor 3 subunit K (216 aa).

The 163-residue stretch at 40-202 (YDLDANLAVL…HIKSKNIAEK (163 aa)) folds into the PCI domain.

It belongs to the eIF-3 subunit K family. As to quaternary structure, component of the eukaryotic translation initiation factor 3 (eIF-3) complex.

It localises to the cytoplasm. In terms of biological role, component of the eukaryotic translation initiation factor 3 (eIF-3) complex, which is involved in protein synthesis of a specialized repertoire of mRNAs and, together with other initiation factors, stimulates binding of mRNA and methionyl-tRNAi to the 40S ribosome. The eIF-3 complex specifically targets and initiates translation of a subset of mRNAs involved in cell proliferation. The protein is Eukaryotic translation initiation factor 3 subunit K of Nematostella vectensis (Starlet sea anemone).